Reading from the N-terminus, the 753-residue chain is 5-methyltetrahydropteroyltriglutamate--homocysteine methyltransferase (753 aa).

Residues 17–20 and lysine 117 each bind 5-methyltetrahydropteroyltri-L-glutamate; that span reads RELK. L-homocysteine contacts are provided by residues 431–433 and glutamate 484; that span reads IGS. L-methionine-binding positions include 431–433 and glutamate 484; that span reads IGS. 5-methyltetrahydropteroyltri-L-glutamate-binding positions include 515–516 and tryptophan 561; that span reads RC. Aspartate 599 is a binding site for L-homocysteine. Residue aspartate 599 participates in L-methionine binding. Glutamate 605 lines the 5-methyltetrahydropteroyltri-L-glutamate pocket. Residues histidine 641, cysteine 643, and glutamate 665 each contribute to the Zn(2+) site. The active-site Proton donor is histidine 694. Cysteine 726 is a Zn(2+) binding site.

Belongs to the vitamin-B12 independent methionine synthase family. It depends on Zn(2+) as a cofactor.

It carries out the reaction 5-methyltetrahydropteroyltri-L-glutamate + L-homocysteine = tetrahydropteroyltri-L-glutamate + L-methionine. It participates in amino-acid biosynthesis; L-methionine biosynthesis via de novo pathway; L-methionine from L-homocysteine (MetE route): step 1/1. In terms of biological role, catalyzes the transfer of a methyl group from 5-methyltetrahydrofolate to homocysteine resulting in methionine formation. The sequence is that of 5-methyltetrahydropteroyltriglutamate--homocysteine methyltransferase from Escherichia coli O6:K15:H31 (strain 536 / UPEC).